The sequence spans 92 residues: YcgL domain-containing protein Sbal_1869 (92 aa).

Residues 1 to 85 form the YcgL domain; the sequence is MLCAVYKSSR…PQVNLLAEHK (85 aa).

The polypeptide is YcgL domain-containing protein Sbal_1869 (Shewanella baltica (strain OS155 / ATCC BAA-1091)).